The primary structure comprises 650 residues: MGNVQTSTNVYNIDGNGNTFAPSSQMASTASPAIDLKPGVLNPTGKLWQTMGTGAPSADSLVLVVDNKGEYTYLSENMRETLNKAVTDVNMWQPLFQATKSGCGPVVLANFTTISTGYVGATADDAFSNGLVSNGPFLATMHIMELQKTIAARMRDVAIWQKHLDTAMTLMTPDVSAGDVTCKWRSLLEFAQDILPLDNLCRSYPNEFYTVAAQRYPAIRPGQPDTQVALPQPHPLGEVAGSFNAPTSEVGSLVGAGAALSDAISTLASKDLDLVEADTPLPVSVFTPSLAPRTYRPAFIDPQDAAWIAQWNGDANIRIITTYQSTDYTVQLGPGPTRVIDMNAMIDAKLTLDVSGTILPFQENNDLSSAIPAFVLIQTKVPLHSVTQASDVEGITVVSAAESSAINLSVNVRGDPRFDMLHLHAMFERETIAGIPYIYGIGTFLIPSITSSSSFCNPTLMDGELTVTPLLLRETTYKGAVVDTVTPSEVMANQTSEEVASALANDAVLLVSGQLERLATVVGDVIPIASGEDDAATSAIVGRLAIEATMRARHGGDTRALPNFGQLWKRAKRAASMFASNPALALQVGVPVLADSGILSALTSGVSTAIRTGSLGKGVSDASSKLNARQSLTLARKTFFKKVEELWPSQ.

Gly-2 carries the N-myristoyl glycine; by host lipid modification. Asn-110, Asn-407, and Asn-493 each carry an N-linked (GlcNAc...) asparagine; by host glycan.

It belongs to the aquareoviridae outer capsid VP4 protein family. Interacts with VP6 and VP7. Post-translationally, cleaved during the endosomal proteolytic disassembly of the outer capsid. In terms of processing, N-terminally myristoylated. This acylation is essential for the membrane fusion activity.

It is found in the virion. In terms of biological role, interacts with VP7 to form the outer icosahedral capsid with an incomplete T=13 symmetry, about 80 nm in diameter, and consisting of 200 VP4-VP7 trimers. Myristoylated N-terminal peptide may be released in the endosome and involved in permeabilization and delivery of transcriptionally active viral particles into the host cell cytoplasm (Potential). In Ctenopharyngodon idella (Grass carp), this protein is Outer capsid protein VP4 (S6).